The following is an 834-amino-acid chain: Copper-exporting P-type ATPase (834 aa).

HMA domains lie at 3–64 (QTID…YDAS) and 99–162 (DSQQ…YGAE). The Cu(+) site is built by Cys-14, Cys-17, Cys-110, and Cys-113. 6 helical membrane-spanning segments follow: residues 187 to 207 (WQAI…MIGD), 218 to 238 (LWLV…GHFY), 254 to 274 (TLVA…NLWP), 284 to 304 (LYYE…MLEA), 438 to 458 (AVFV…WYFF), and 464 to 484 (IVYT…CALG). Catalysis depends on Asp-523, which acts as the 4-aspartylphosphate intermediate. Asp-720 and Asp-724 together coordinate Mg(2+). The next 2 membrane-spanning stretches (helical) occupy residues 779-799 (LGAF…LWPF) and 801-821 (GTLL…ITVV).

It belongs to the cation transport ATPase (P-type) (TC 3.A.3) family. Type IB subfamily.

It is found in the cell inner membrane. Its subcellular location is the cytoplasm. The catalysed reaction is Cu(+)(in) + ATP + H2O = Cu(+)(out) + ADP + phosphate + H(+). In terms of biological role, involved in Cu(+) export. Probably also encodes a cytoplasmic copper chaperone CopA(Z) that is produced by programmed ribosomal frameshifting. The protein is Copper-exporting P-type ATPase (copA) of Escherichia coli O157:H7.